The sequence spans 253 residues: Putative ankyrin repeat protein NMB1133/NMB1171 (253 aa).

2 ANK repeats span residues 196 to 225 and 229 to 252; these read DGYTPLHHEAIAGNALMVQAMLEYGANPAS and EGYTALDFACLTGWQNVADLLEPR.

This Neisseria meningitidis serogroup B (strain ATCC BAA-335 / MC58) protein is Putative ankyrin repeat protein NMB1133/NMB1171.